The following is a 110-amino-acid chain: Iron-sulfur cluster insertion protein ErpA (110 aa).

Residues Cys38, Cys102, and Cys104 each coordinate iron-sulfur cluster.

This sequence belongs to the HesB/IscA family. As to quaternary structure, homodimer. Iron-sulfur cluster is required as a cofactor.

Functionally, required for insertion of 4Fe-4S clusters for at least IspG. In Marinobacter nauticus (strain ATCC 700491 / DSM 11845 / VT8) (Marinobacter aquaeolei), this protein is Iron-sulfur cluster insertion protein ErpA.